The following is a 358-amino-acid chain: Flap endonuclease 1 (358 aa).

Residues methionine 1–arginine 103 form an N-domain region. Aspartate 34 contacts Mg(2+). Arginine 47 and arginine 69 together coordinate DNA. Mg(2+) contacts are provided by aspartate 85, glutamate 157, glutamate 159, aspartate 178, and aspartate 180. The I-domain stretch occupies residues leucine 121–tyrosine 252. Glutamate 157 is a binding site for DNA. Residues glycine 230 and aspartate 232 each contribute to the DNA site. Aspartate 232 serves as a coordination point for Mg(2+). Residues lysine 346 to phenylalanine 354 form an interaction with PCNA region.

Belongs to the XPG/RAD2 endonuclease family. FEN1 subfamily. As to quaternary structure, interacts with PCNA. Three molecules of FEN1 bind to one PCNA trimer with each molecule binding to one PCNA monomer. PCNA stimulates the nuclease activity without altering cleavage specificity. Requires Mg(2+) as cofactor. In terms of processing, phosphorylated. Phosphorylation upon DNA damage induces relocalization to the nuclear plasma.

The protein localises to the nucleus. Its subcellular location is the nucleolus. It is found in the nucleoplasm. It localises to the mitochondrion. Its function is as follows. Structure-specific nuclease with 5'-flap endonuclease and 5'-3' exonuclease activities involved in DNA replication and repair. During DNA replication, cleaves the 5'-overhanging flap structure that is generated by displacement synthesis when DNA polymerase encounters the 5'-end of a downstream Okazaki fragment. It enters the flap from the 5'-end and then tracks to cleave the flap base, leaving a nick for ligation. Also involved in the long patch base excision repair (LP-BER) pathway, by cleaving within the apurinic/apyrimidinic (AP) site-terminated flap. Acts as a genome stabilization factor that prevents flaps from equilibrating into structures that lead to duplications and deletions. Also possesses 5'-3' exonuclease activity on nicked or gapped double-stranded DNA, and exhibits RNase H activity. Also involved in replication and repair of rDNA and in repairing mitochondrial DNA. The protein is Flap endonuclease 1 of Enterocytozoon bieneusi (strain H348) (Microsporidian parasite).